Here is a 546-residue protein sequence, read N- to C-terminus: Serine/threonine-protein kinase Chk2 (546 aa).

The interval 1–70 (MKSHHQSHSS…SSHSSSGTLS (70 aa)) is disordered. Positions 8–70 (HSSTSSKAHD…SSHSSSGTLS (63 aa)) are enriched in low complexity. The residue at position 68 (Thr68) is a Phosphothreonine; by MAP3K20. Position 71 is a phosphoserine; by PLK3 (Ser71). The residue at position 77 (Thr77) is a Phosphothreonine; by ATM and MAP3K20. Ser82 carries the post-translational modification Phosphoserine; by PLK3. In terms of domain architecture, FHA spans 117–179 (YWFGRDKSCE…NGTFVNTELI (63 aa)). The region spanning 224–490 (YIMSKTLGSG…TEEALNHPWL (267 aa)) is the Protein kinase domain. Residues 231–238 (GSGACGEV), Lys253, and 306–312 (ELMEGGE) contribute to the ATP site. Residue Asp351 is the Proton acceptor of the active site. Residues 355–356 (EN) and Asp372 each bind ATP. Residues 372 to 398 (DFGQSKILGETSLMRTLCGTPTYLAPE) are T-loop/activation segment. A Phosphoserine; by autocatalysis modification is found at Ser383. Residues Thr387 and Thr391 each carry the phosphothreonine; by autocatalysis modification. Ser460 carries the post-translational modification Phosphoserine.

This sequence belongs to the protein kinase superfamily. CAMK Ser/Thr protein kinase family. CHK2 subfamily. As to quaternary structure, homodimer. Homodimerization is part of the activation process but the dimer may dissociate following activation. Interacts with PML. Interacts with TP53. Interacts with RB1; phosphorylates RB1. Interacts with BRCA1. Interacts (phosphorylated at Thr-68) with MDC1; requires ATM-mediated phosphorylation of CHEK2. Interacts with TP53BP1; modulates CHEK2 phosphorylation at Thr-68 in response to ionizing radiation. Interacts with CDC25A; phosphorylates CDC25A and mediates its degradation in response to ionizing radiation. Interacts with CUL1; mediates CHEK2 ubiquitination and regulation. Interacts with CDKN2AIP. Interacts (via protein kinase domain) with CCAR2 (via N-terminus). Interacts with SIRT1. Requires Mg(2+) as cofactor. Phosphorylated. Phosphorylated at Ser-82 by PLK3 in response to DNA damage, promoting phosphorylation at Thr-77 by ATM and the G2/M transition checkpoint. Phosphorylation at Thr-77 induces homodimerization. Autophosphorylates at Thr-387 and Thr-391 in the T-loop/activation segment upon dimerization to become fully active. DNA damage-induced autophosphorylation at Ser-383 induces CUL1-mediated ubiquitination and regulates the pro-apoptotic function. Phosphorylation at Ser-460 also regulates ubiquitination. Phosphorylated by PLK4. Post-translationally, ubiquitinated. CUL1-mediated ubiquitination regulates the pro-apoptotic function. Ubiquitination may also regulate protein stability. Ubiquitinated by RNF8 via 'Lys-48'-linked ubiquitination. As to expression, ubiquitously expressed with higher levels in the thymus, spleen and colon (at protein level).

It localises to the nucleus. It is found in the PML body. The protein localises to the nucleoplasm. It catalyses the reaction L-seryl-[protein] + ATP = O-phospho-L-seryl-[protein] + ADP + H(+). It carries out the reaction L-threonyl-[protein] + ATP = O-phospho-L-threonyl-[protein] + ADP + H(+). Activated through phosphorylation at Thr-68 by ATM in response to DNA double-strand breaks. Activation is modulated by several mediators including MDC1 and TP53BP1. Induces homodimerization with exchange of the T-loop/activation segment between protomers and transphosphorylation of the protomers. The autophosphorylated kinase dimer is fully active. Negatively regulated by PPM1D through dephosphorylation of Thr-68. Serine/threonine-protein kinase which is required for checkpoint-mediated cell cycle arrest, activation of DNA repair and apoptosis in response to the presence of DNA double-strand breaks. May also negatively regulate cell cycle progression during unperturbed cell cycles. Following activation, phosphorylates numerous effectors preferentially at the consensus sequence [L-X-R-X-X-S/T]. Regulates cell cycle checkpoint arrest through phosphorylation of CDC25A, CDC25B and CDC25C, inhibiting their activity. Inhibition of CDC25 phosphatase activity leads to increased inhibitory tyrosine phosphorylation of CDK-cyclin complexes and blocks cell cycle progression. May also phosphorylate NEK6 which is involved in G2/M cell cycle arrest. Regulates DNA repair through phosphorylation of BRCA2, enhancing the association of RAD51 with chromatin which promotes DNA repair by homologous recombination. Also stimulates the transcription of genes involved in DNA repair (including BRCA2) through the phosphorylation and activation of the transcription factor FOXM1. Regulates apoptosis through the phosphorylation of p53/TP53, MDM4 and PML. Phosphorylation of p53/TP53 at 'Ser-20' by CHEK2 may alleviate inhibition by MDM2, leading to accumulation of active p53/TP53. Phosphorylation of MDM4 may also reduce degradation of p53/TP53. Also controls the transcription of pro-apoptotic genes through phosphorylation of the transcription factor E2F1. Tumor suppressor, it may also have a DNA damage-independent function in mitotic spindle assembly by phosphorylating BRCA1. Its absence may be a cause of the chromosomal instability observed in some cancer cells. Promotes the CCAR2-SIRT1 association and is required for CCAR2-mediated SIRT1 inhibition. Under oxidative stress, promotes ATG7 ubiquitination by phosphorylating the E3 ubiquitin ligase TRIM32 at 'Ser-56' leading to positive regulation of the autophagosme assembly. This is Serine/threonine-protein kinase Chk2 from Mus musculus (Mouse).